The sequence spans 421 residues: ATP-dependent RNA helicase RhlB (421 aa).

A Q motif motif is present at residues 9 to 37 (QKFSDFSLHPKVVEALEKKGFHNCTPIQA). The region spanning 40–219 (LPLTLAGRDV…FEQMNNAEYI (180 aa)) is the Helicase ATP-binding domain. Position 53–60 (53–60 (AQTGTGKT)) interacts with ATP. The short motif at 165 to 168 (DEAD) is the DEAD box element. The region spanning 245–390 (RLLQTLIEEE…VSKYNPDALM (146 aa)) is the Helicase C-terminal domain. Residues 392–421 (DLPKPLRLTRPRTGNGPRRTGAPRNRRRSG) form a disordered region. Residues 402–414 (PRTGNGPRRTGAP) show a composition bias toward low complexity.

The protein belongs to the DEAD box helicase family. RhlB subfamily. Component of the RNA degradosome, which is a multiprotein complex involved in RNA processing and mRNA degradation.

The protein localises to the cytoplasm. It carries out the reaction ATP + H2O = ADP + phosphate + H(+). In terms of biological role, DEAD-box RNA helicase involved in RNA degradation. Has RNA-dependent ATPase activity and unwinds double-stranded RNA. In Shigella dysenteriae serotype 1 (strain Sd197), this protein is ATP-dependent RNA helicase RhlB.